The primary structure comprises 318 residues: Ubiquitin-like domain-containing CTD phosphatase 1 (318 aa).

The Ubiquitin-like domain occupies 3 to 81 (LSLIIKWGGQ…IMMMGTREES (79 aa)). One can recognise an FCP1 homology domain in the interval 133–294 (PREGKKLLVL…LKLSQYLKEI (162 aa)). Mg(2+) contacts are provided by Asp143, Asp145, and Asp253.

Requires Mg(2+) as cofactor.

It is found in the nucleus. The enzyme catalyses O-phospho-L-seryl-[protein] + H2O = L-seryl-[protein] + phosphate. It catalyses the reaction O-phospho-L-threonyl-[protein] + H2O = L-threonyl-[protein] + phosphate. In terms of biological role, dephosphorylates 26S nuclear proteasomes, thereby decreasing their proteolytic activity. Recruited to the 19S regulatory particle of the 26S proteasome where it dephosphorylates 19S component psmc2 which impairs psmc2 ATPase activity and disrupts 26S proteasome assembly. Has also been reported to stimulate the proteolytic activity of the 26S proteasome. The protein is Ubiquitin-like domain-containing CTD phosphatase 1 (ublcp1) of Xenopus tropicalis (Western clawed frog).